Consider the following 996-residue polypeptide: Cilia- and flagella-associated protein 251 (996 aa).

11 WD repeats span residues 73 to 114 (GHCN…PKKT), 118 to 164 (PHPN…EPCL), 168 to 211 (EFDR…KGFN), 219 to 258 (PSLKVLTQTVFIPDNTQVVTGTTDGHIIVWDISLIIEKVD), 282 to 319 (KGSNSINILKIQDNYLVIGSSNGSIRFYDFQYRIIAWF), 399 to 438 (SIVSPIIAMSCRPNSNVIGICCENGYLYEWNFQEKSSVLS), 445 to 485 (TDKE…WQNS), 494 to 533 (QGKPKVNMQVFSSDSKNLATMDADYAVSLFTIDHRQFDVN), 547 to 593 (IHHS…YSKQ), 615 to 658 (EQET…FKFC), and 719 to 759 (AHPD…LEQI). Residues 971–996 (DLEGEERDDNIEDQYEDEENEEYDQD) form a disordered region.

The protein localises to the cell projection. The protein resides in the cilium. Functionally, as component of a spoke-associated complex, regulates ciliary mobility by mediating a stable and functional assembly of the radial spoke 3 (RS3). This Tetrahymena thermophila (strain SB210) protein is Cilia- and flagella-associated protein 251.